A 215-amino-acid polypeptide reads, in one-letter code: Ribose-5-phosphate isomerase A (215 aa).

Substrate contacts are provided by residues 26 to 29 (TGST), 79 to 82 (DGAD), and 92 to 95 (KGGG). The active-site Proton acceptor is the E101. K119 contacts substrate.

It belongs to the ribose 5-phosphate isomerase family. In terms of assembly, homodimer.

The catalysed reaction is aldehydo-D-ribose 5-phosphate = D-ribulose 5-phosphate. The protein operates within carbohydrate degradation; pentose phosphate pathway; D-ribose 5-phosphate from D-ribulose 5-phosphate (non-oxidative stage): step 1/1. Functionally, catalyzes the reversible conversion of ribose-5-phosphate to ribulose 5-phosphate. The sequence is that of Ribose-5-phosphate isomerase A from Xylella fastidiosa (strain M12).